The chain runs to 508 residues: ATP synthase subunit alpha (508 aa).

Residue 169–176 (GDRQTGKT) coordinates ATP.

This sequence belongs to the ATPase alpha/beta chains family. As to quaternary structure, F-type ATPases have 2 components, CF(1) - the catalytic core - and CF(0) - the membrane proton channel. CF(1) has five subunits: alpha(3), beta(3), gamma(1), delta(1), epsilon(1). CF(0) has three main subunits: a(1), b(2) and c(9-12). The alpha and beta chains form an alternating ring which encloses part of the gamma chain. CF(1) is attached to CF(0) by a central stalk formed by the gamma and epsilon chains, while a peripheral stalk is formed by the delta and b chains.

It is found in the cell inner membrane. The enzyme catalyses ATP + H2O + 4 H(+)(in) = ADP + phosphate + 5 H(+)(out). In terms of biological role, produces ATP from ADP in the presence of a proton gradient across the membrane. The alpha chain is a regulatory subunit. The protein is ATP synthase subunit alpha of Allorhizobium ampelinum (strain ATCC BAA-846 / DSM 112012 / S4) (Agrobacterium vitis (strain S4)).